The primary structure comprises 246 residues: Large ribosomal subunit protein uL2 (246 aa).

The segment at 197-227 (SPYAHPHGGGSHQKGGTPVPKTAPPGQKVGF) is disordered.

The protein belongs to the universal ribosomal protein uL2 family. As to quaternary structure, part of the 50S ribosomal subunit. Forms a bridge to the 30S subunit in the 70S ribosome.

Its function is as follows. One of the primary rRNA binding proteins. Required for association of the 30S and 50S subunits to form the 70S ribosome, for tRNA binding and peptide bond formation. It has been suggested to have peptidyltransferase activity; this is somewhat controversial. Makes several contacts with the 16S rRNA in the 70S ribosome. The protein is Large ribosomal subunit protein uL2 of Pyrobaculum aerophilum (strain ATCC 51768 / DSM 7523 / JCM 9630 / CIP 104966 / NBRC 100827 / IM2).